Reading from the N-terminus, the 295-residue chain is Ubiquinol-cytochrome c reductase complex assembly factor 1 (295 aa).

Belongs to the CBP3 family. As to quaternary structure, interacts with UQCC2. Interacts with UQCC3. Forms a complex, named COMB/coordinator of mitochondrial CYTB biogenesis, composed of UQCC1, UQCC2, UQCC4, UQCC5 and UQCC6; stabilizes nascent cytochrome b/MT-CYB and promotes its membrane insertion. Forms a complex, named COMA, composed of UQCC1, UQCC2 and UQCC4; activates MT-CYB translation. Forms a complex, named COMC, composed of UQCC1, UQCC2; UQCC3 and UQCC4; mediates MT-CYB hemylation and association with the first nuclear-encoded CIII subunit UQCRQ. In the brain it is restricted to the olfactory bulb, the hippocampus, the piriform cortex and the Purkinje cells.

Its subcellular location is the mitochondrion inner membrane. It is found in the cytoplasmic vesicle. Its function is as follows. Required for the assembly of the ubiquinol-cytochrome c reductase complex (mitochondrial respiratory chain complex III or cytochrome b-c1 complex). Involved in cytochrome b translation and/or stability. The chain is Ubiquinol-cytochrome c reductase complex assembly factor 1 (Uqcc1) from Mus musculus (Mouse).